A 972-amino-acid polypeptide reads, in one-letter code: Translation initiation factor IF-2 (972 aa).

Residues histidine 49–lysine 63 show a composition bias toward basic and acidic residues. 2 disordered regions span residues histidine 49–isoleucine 86 and aspartate 100–alanine 383. The segment covering glycine 105 to alanine 114 has biased composition (low complexity). Residues glutamate 121–alanine 177 are compositionally biased toward basic and acidic residues. The segment covering lysine 178–glutamine 209 has biased composition (low complexity). Residues aspartate 210–arginine 261 are compositionally biased toward basic and acidic residues. Over residues proline 277–proline 286 the composition is skewed to pro residues. Positions lysine 298–glycine 327 are enriched in low complexity. A compositionally biased stretch (gly residues) spans serine 356–lysine 369. In terms of domain architecture, tr-type G spans proline 472–lysine 641. The segment at glycine 481–threonine 488 is G1. Glycine 481–threonine 488 is a binding site for GTP. The segment at glycine 506–histidine 510 is G2. The tract at residues aspartate 527 to glycine 530 is G3. Residues aspartate 527–histidine 531 and asparagine 581–aspartate 584 contribute to the GTP site. The tract at residues asparagine 581 to aspartate 584 is G4. Residues serine 617–lysine 619 are G5.

The protein belongs to the TRAFAC class translation factor GTPase superfamily. Classic translation factor GTPase family. IF-2 subfamily.

The protein localises to the cytoplasm. Functionally, one of the essential components for the initiation of protein synthesis. Protects formylmethionyl-tRNA from spontaneous hydrolysis and promotes its binding to the 30S ribosomal subunits. Also involved in the hydrolysis of GTP during the formation of the 70S ribosomal complex. The chain is Translation initiation factor IF-2 from Burkholderia ambifaria (strain MC40-6).